Consider the following 103-residue polypeptide: Small ribosomal subunit protein uS10 (103 aa).

It belongs to the universal ribosomal protein uS10 family. As to quaternary structure, part of the 30S ribosomal subunit.

Its function is as follows. Involved in the binding of tRNA to the ribosomes. This chain is Small ribosomal subunit protein uS10, found in Pseudoalteromonas translucida (strain TAC 125).